The sequence spans 421 residues: Lipid II:glycine glycyltransferase (421 aa).

It belongs to the FemABX family. As to quaternary structure, monomer.

The protein localises to the cytoplasm. The enzyme catalyses beta-D-GlcNAc-(1-&gt;4)-Mur2Ac(oyl-L-Ala-D-isoglutaminyl-L-Lys-D-Ala-D-Ala)-di-trans,octa-cis-undecaprenyl diphosphate + glycyl-tRNA(Gly) = beta-D-GlcNAc-(1-&gt;4)-Mur2Ac(oyl-L-Ala-D-isoglutaminyl-L-Lys-(N(6)-Gly)-D-Ala-D-Ala)-di-trans,octa-cis-undecaprenyl diphosphate + tRNA(Gly) + H(+). Catalyzes the incorporation of the first glycine of the pentaglycine interpeptide bridge, which is characteristic of the S.aureus peptidoglycan. This glycine is added to the epsilon-amino group of the L-lysine of the membrane-bound lipid II intermediate (GlcNAc-(beta-1,4)-N-acetylmuramic acid(-L-Ala-D-iGln-L-Lys-D-Ala-D-Ala)-pyrophosphoryl-undecaprenol), using glycyl-tRNA(Gly) as donor, in a ribosome-independent mechanism. This chain is Lipid II:glycine glycyltransferase (femX), found in Staphylococcus aureus (strain bovine RF122 / ET3-1).